The sequence spans 504 residues: Maturase K (504 aa).

The protein belongs to the intron maturase 2 family. MatK subfamily.

The protein resides in the plastid. It is found in the chloroplast. Its function is as follows. Usually encoded in the trnK tRNA gene intron. Probably assists in splicing its own and other chloroplast group II introns. In Fagus japonica (Japanese beech), this protein is Maturase K.